The sequence spans 148 residues: MTAEETVEIFTDGACKGNPGPGGWGAILRLGPHEKELWGGEKETTNNRMELTAAIRAIEALKRPIGGKIYTDSQYVMKGINEWIHGWKKNGWKTSDKKPVKNADLWQLLDAQVKLHKLEWIWVRGHSGHPENERADALANRGIEELKG.

Positions 3–144 (AEETVEIFTD…ADALANRGIE (142 aa)) constitute an RNase H type-1 domain. Positions 12, 50, 72, and 136 each coordinate Mg(2+). The segment at 129–148 (HPENERADALANRGIEELKG) is disordered.

Belongs to the RNase H family. Monomer. It depends on Mg(2+) as a cofactor.

It is found in the cytoplasm. The enzyme catalyses Endonucleolytic cleavage to 5'-phosphomonoester.. In terms of biological role, endonuclease that specifically degrades the RNA of RNA-DNA hybrids. The sequence is that of Ribonuclease H from Dechloromonas aromatica (strain RCB).